We begin with the raw amino-acid sequence, 142 residues long: Baculoviral IAP repeat-containing protein 5 (142 aa).

Residues 18–88 form a BIR repeat; the sequence is RISTFKNWPF…KHSSGCAFLS (71 aa). The residue at position 20 (Ser20) is a Phosphoserine; by AURKC. Lys23 bears the N6-acetyllysine mark. Phosphothreonine; by CDK1 and CDK15 is present on Thr34. Thr48 bears the Phosphothreonine mark. Residues Cys57, Cys60, His77, and Cys84 each contribute to the Zn(2+) site. Lys90, Lys110, Lys112, and Lys115 each carry N6-acetyllysine. Thr117 carries the phosphothreonine; by AURKB modification. Lys129 is subject to N6-acetyllysine.

The protein belongs to the IAP family. Monomer or homodimer. Exists as a homodimer in the apo state and as a monomer in the CPC-bound state. The monomer protects cells against apoptosis more efficiently than the dimer. Only the dimeric form is capable of enhancing tubulin stability in cells. When phosphorylated, interacts with LAMTOR5/HBXIP; the resulting complex binds pro-CASP9, as well as active CASP9, but much less efficiently. Component of the chromosomal passenger complex (CPC) composed of at least BIRC5/survivin, CDCA8/borealin, INCENP, AURKB or AURKC; in the complex forms a triple-helix bundle-based subcomplex with INCENP and CDCA8. Interacts with JTB. Interacts (via BIR domain) with histone H3 phosphorylated at 'Thr-3' (H3pT3). Interacts with EVI5. Interacts with GTP-bound RAN in both the S and M phases of the cell cycle. Interacts with USP9X. Interacts with tubulin. Interacts with BIRC2/c-IAP1. The acetylated form at Lys-129 interacts with STAT3. The monomeric form deacetylated at Lys-129 interacts with XPO1/CRM1. The monomeric form interacts with XIAP/BIRC4. Both the dimeric and monomeric form can interact with DIABLO/SMAC. Interacts with BIRC6/bruce. Interacts with FBXL7; this interaction facilitates the polyubiquitination and subsequent proteasomal degradation of BIRC5 by the SCF(FBXL7) E3 ubiquitin-protein ligase complex. Ubiquitinated by the Cul9-RING ubiquitin-protein ligase complex, leading to its degradation. Ubiquitination is required for centrosomal targeting. Deubiquitinated by USP35 or USP38; leading to stabilization. In terms of processing, acetylation at Lys-129 results in its homodimerization, while deacetylation promotes the formation of monomers which heterodimerize with XPO1/CRM1 which facilitates its nuclear export. The acetylated form represses STAT3 transactivation. The dynamic equilibrium between its acetylation and deacetylation at Lys-129 determines its interaction with XPO1/CRM1, its subsequent subcellular localization, and its ability to inhibit STAT3 transactivation. Post-translationally, in vitro phosphorylation at Thr-117 by AURKB prevents interaction with INCENP and localization to mitotic chromosomes. Phosphorylation at Thr-48 by CK2 is critical for its mitotic and anti-apoptotic activities. Phosphorylation at Thr-34 by CDK15 is critical for its anti-apoptotic activity. Phosphorylation at Ser-20 by AURKC is critical for regulation of proper chromosome alignment and segregation, and possibly cytokinesis.

It localises to the cytoplasm. The protein resides in the nucleus. It is found in the chromosome. Its subcellular location is the centromere. The protein localises to the cytoskeleton. It localises to the spindle. The protein resides in the kinetochore. It is found in the midbody. Functionally, multitasking protein that has dual roles in promoting cell proliferation and preventing apoptosis. Component of a chromosome passage protein complex (CPC) which is essential for chromosome alignment and segregation during mitosis and cytokinesis. Acts as an important regulator of the localization of this complex; directs CPC movement to different locations from the inner centromere during prometaphase to midbody during cytokinesis and participates in the organization of the center spindle by associating with polymerized microtubules. Involved in the recruitment of CPC to centromeres during early mitosis via association with histone H3 phosphorylated at 'Thr-3' (H3pT3) during mitosis. The complex with RAN plays a role in mitotic spindle formation by serving as a physical scaffold to help deliver the RAN effector molecule TPX2 to microtubules. May counteract a default induction of apoptosis in G2/M phase. The acetylated form represses STAT3 transactivation of target gene promoters. May play a role in neoplasia. Inhibitor of CASP3 and CASP7. Essential for the maintenance of mitochondrial integrity and function. This chain is Baculoviral IAP repeat-containing protein 5 (BIRC5), found in Felis catus (Cat).